The sequence spans 246 residues: 3-deoxy-manno-octulosonate cytidylyltransferase (246 aa).

This sequence belongs to the KdsB family.

The protein resides in the cytoplasm. It catalyses the reaction 3-deoxy-alpha-D-manno-oct-2-ulosonate + CTP = CMP-3-deoxy-beta-D-manno-octulosonate + diphosphate. Its pathway is nucleotide-sugar biosynthesis; CMP-3-deoxy-D-manno-octulosonate biosynthesis; CMP-3-deoxy-D-manno-octulosonate from 3-deoxy-D-manno-octulosonate and CTP: step 1/1. The protein operates within bacterial outer membrane biogenesis; lipopolysaccharide biosynthesis. Functionally, activates KDO (a required 8-carbon sugar) for incorporation into bacterial lipopolysaccharide in Gram-negative bacteria. In Bradyrhizobium sp. (strain BTAi1 / ATCC BAA-1182), this protein is 3-deoxy-manno-octulosonate cytidylyltransferase.